Consider the following 281-residue polypeptide: Pantothenate synthetase (281 aa).

Residue 30-37 (MGNLHLGH) participates in ATP binding. His-37 acts as the Proton donor in catalysis. Residue Gln-61 participates in (R)-pantoate binding. A beta-alanine-binding site is contributed by Gln-61. 149–152 (GRKD) contacts ATP. (R)-pantoate is bound at residue Gln-155. Residues Ile-178 and 186-189 (MSSR) each bind ATP.

Belongs to the pantothenate synthetase family. Homodimer.

The protein resides in the cytoplasm. It catalyses the reaction (R)-pantoate + beta-alanine + ATP = (R)-pantothenate + AMP + diphosphate + H(+). It participates in cofactor biosynthesis; (R)-pantothenate biosynthesis; (R)-pantothenate from (R)-pantoate and beta-alanine: step 1/1. Its function is as follows. Catalyzes the condensation of pantoate with beta-alanine in an ATP-dependent reaction via a pantoyl-adenylate intermediate. The chain is Pantothenate synthetase from Shewanella woodyi (strain ATCC 51908 / MS32).